Here is a 337-residue protein sequence, read N- to C-terminus: ATP-dependent 6-phosphofructokinase (337 aa).

An ATP-binding site is contributed by G11. R21 to R25 provides a ligand contact to ADP. Residues R72–Y73 and G102–S105 each bind ATP. Residue D103 coordinates Mg(2+). T125 to D127 lines the substrate pocket. The active-site Proton acceptor is D127. R154 lines the ADP pocket. Residues R162 and M169–R171 contribute to the substrate site. ADP-binding positions include G185–D187, K212, and K214–H216. Residues E223, R245, and H251–R254 each bind substrate.

Belongs to the phosphofructokinase type A (PFKA) family. ATP-dependent PFK group I subfamily. Prokaryotic clade 'B1' sub-subfamily. As to quaternary structure, homotetramer. Requires Mg(2+) as cofactor.

The protein localises to the cytoplasm. It catalyses the reaction beta-D-fructose 6-phosphate + ATP = beta-D-fructose 1,6-bisphosphate + ADP + H(+). Its pathway is carbohydrate degradation; glycolysis; D-glyceraldehyde 3-phosphate and glycerone phosphate from D-glucose: step 3/4. With respect to regulation, allosterically activated by ADP and other diphosphonucleosides, and allosterically inhibited by phosphoenolpyruvate. Functionally, catalyzes the phosphorylation of D-fructose 6-phosphate to fructose 1,6-bisphosphate by ATP, the first committing step of glycolysis. The protein is ATP-dependent 6-phosphofructokinase of Streptococcus pyogenes serotype M28 (strain MGAS6180).